The primary structure comprises 308 residues: Ribosomal RNA small subunit methyltransferase H (308 aa).

S-adenosyl-L-methionine is bound by residues 36 to 38 (GGH), aspartate 55, phenylalanine 82, aspartate 103, and glutamine 110.

Belongs to the methyltransferase superfamily. RsmH family.

It is found in the cytoplasm. It carries out the reaction cytidine(1402) in 16S rRNA + S-adenosyl-L-methionine = N(4)-methylcytidine(1402) in 16S rRNA + S-adenosyl-L-homocysteine + H(+). Functionally, specifically methylates the N4 position of cytidine in position 1402 (C1402) of 16S rRNA. The protein is Ribosomal RNA small subunit methyltransferase H of Helicobacter pylori (strain ATCC 700392 / 26695) (Campylobacter pylori).